The primary structure comprises 200 residues: Recombination protein RecR (200 aa).

The segment at C59–C74 adopts a C4-type zinc-finger fold. The Toprim domain maps to T82–P176.

It belongs to the RecR family.

In terms of biological role, may play a role in DNA repair. It seems to be involved in an RecBC-independent recombinational process of DNA repair. It may act with RecF and RecO. The sequence is that of Recombination protein RecR from Acaryochloris marina (strain MBIC 11017).